A 511-amino-acid polypeptide reads, in one-letter code: Phosphoenolpyruvate carboxylase (511 aa).

The protein belongs to the PEPCase type 2 family. Homotetramer. Mg(2+) is required as a cofactor.

It catalyses the reaction oxaloacetate + phosphate = phosphoenolpyruvate + hydrogencarbonate. Functionally, catalyzes the irreversible beta-carboxylation of phosphoenolpyruvate (PEP) to form oxaloacetate (OAA), a four-carbon dicarboxylic acid source for the tricarboxylic acid cycle. This is Phosphoenolpyruvate carboxylase from Saccharolobus islandicus (strain M.16.27) (Sulfolobus islandicus).